We begin with the raw amino-acid sequence, 419 residues long: MTTQLEQAWEIAKQRYAAVGVDVEEALRQLDRLPVSMHCWQGDDVAGFENPAGSLTGGIQATGNYPGKARNAEELRADLEQALSLIPGPKRLNLHAIYLESDAPVARNEIKPEHFKNWVTWAKANKLGLDFNPSCFSHPLSADGFTLSHANDEIRQFWIDHCKASRRVSAYFGEQLGTPSVMNIWVPDGMKDITVDRFAPRQRLLNALDEVISEKLDPAHHIDAVESKLFGIGAESYTVGSNEFYMGYATSRQTALCLDAGHFHPTEVISDKISAAMLYIPRLLLHVSRPVRWDSDHVVLLDDETQAIASEIIRHNLFDRVHIGLDFFDASINRIAAWVIGTRNMKKALLRALLEPTAQLRQLENDGDYTARLALLEEQKSLPWQAIWEMYCQRHDTPAGSQWLDNVRAYENAVLSQRG.

Histidine 262, aspartate 294, and aspartate 296 together coordinate Mn(2+).

It belongs to the rhamnose isomerase family. As to quaternary structure, homotetramer. Requires Mn(2+) as cofactor.

Its subcellular location is the cytoplasm. The catalysed reaction is L-rhamnopyranose = L-rhamnulose. The protein operates within carbohydrate degradation; L-rhamnose degradation; glycerone phosphate from L-rhamnose: step 1/3. In terms of biological role, catalyzes the interconversion of L-rhamnose and L-rhamnulose. The chain is L-rhamnose isomerase from Klebsiella pneumoniae (strain 342).